The chain runs to 284 residues: Acetylglutamate kinase (284 aa).

Residues 64–65, Arg-86, and Asn-179 each bind substrate; that span reads GG.

This sequence belongs to the acetylglutamate kinase family. ArgB subfamily.

It is found in the cytoplasm. The enzyme catalyses N-acetyl-L-glutamate + ATP = N-acetyl-L-glutamyl 5-phosphate + ADP. The protein operates within amino-acid biosynthesis; L-arginine biosynthesis; N(2)-acetyl-L-ornithine from L-glutamate: step 2/4. Catalyzes the ATP-dependent phosphorylation of N-acetyl-L-glutamate. In Acaryochloris marina (strain MBIC 11017), this protein is Acetylglutamate kinase.